A 434-amino-acid polypeptide reads, in one-letter code: Trehalose-phosphatase (434 aa).

Positions 156 and 158 each coordinate Mg(2+). Asp158 (proton donor/acceptor) is an active-site residue. 275–277 is a substrate binding site; it reads QKK. Residue Asp366 coordinates Mg(2+).

This sequence belongs to the gob-1 trehalose phosphatase family. Mg(2+) serves as cofactor.

The enzyme catalyses alpha,alpha-trehalose 6-phosphate + H2O = alpha,alpha-trehalose + phosphate. Functionally, catalyzes the hydrolysis of trehalose 6-phosphate to trehalose and phosphate; prevents the accumulation of toxic levels of trehalose 6-phosphate. The protein is Trehalose-phosphatase (gob-1) of Caenorhabditis briggsae.